We begin with the raw amino-acid sequence, 356 residues long: S-adenosylmethionine:tRNA ribosyltransferase-isomerase (356 aa).

This sequence belongs to the QueA family. In terms of assembly, monomer.

The protein resides in the cytoplasm. It catalyses the reaction 7-aminomethyl-7-carbaguanosine(34) in tRNA + S-adenosyl-L-methionine = epoxyqueuosine(34) in tRNA + adenine + L-methionine + 2 H(+). It participates in tRNA modification; tRNA-queuosine biosynthesis. In terms of biological role, transfers and isomerizes the ribose moiety from AdoMet to the 7-aminomethyl group of 7-deazaguanine (preQ1-tRNA) to give epoxyqueuosine (oQ-tRNA). This Escherichia fergusonii (strain ATCC 35469 / DSM 13698 / CCUG 18766 / IAM 14443 / JCM 21226 / LMG 7866 / NBRC 102419 / NCTC 12128 / CDC 0568-73) protein is S-adenosylmethionine:tRNA ribosyltransferase-isomerase.